Here is a 240-residue protein sequence, read N- to C-terminus: Octanoyltransferase (240 aa).

One can recognise a BPL/LPL catalytic domain in the interval 49 to 233 (GEAPELVWLL…AFESVFGATR (185 aa)). Substrate-binding positions include 87–94 (RGGQVTYH), 162–164 (AIG), and 175–177 (GIA). The Acyl-thioester intermediate role is filled by Cys-193.

It belongs to the LipB family.

Its subcellular location is the cytoplasm. It catalyses the reaction octanoyl-[ACP] + L-lysyl-[protein] = N(6)-octanoyl-L-lysyl-[protein] + holo-[ACP] + H(+). It functions in the pathway protein modification; protein lipoylation via endogenous pathway; protein N(6)-(lipoyl)lysine from octanoyl-[acyl-carrier-protein]: step 1/2. In terms of biological role, catalyzes the transfer of endogenously produced octanoic acid from octanoyl-acyl-carrier-protein onto the lipoyl domains of lipoate-dependent enzymes. Lipoyl-ACP can also act as a substrate although octanoyl-ACP is likely to be the physiological substrate. In Bradyrhizobium sp. (strain BTAi1 / ATCC BAA-1182), this protein is Octanoyltransferase.